We begin with the raw amino-acid sequence, 437 residues long: Serine hydroxymethyltransferase 1 (437 aa).

Residues leucine 132 and 136 to 138 contribute to the (6S)-5,6,7,8-tetrahydrofolate site; that span reads GHL. Residue lysine 241 is modified to N6-(pyridoxal phosphate)lysine.

This sequence belongs to the SHMT family. Homodimer. Pyridoxal 5'-phosphate is required as a cofactor.

Its subcellular location is the cytoplasm. The catalysed reaction is (6R)-5,10-methylene-5,6,7,8-tetrahydrofolate + glycine + H2O = (6S)-5,6,7,8-tetrahydrofolate + L-serine. Its pathway is one-carbon metabolism; tetrahydrofolate interconversion. The protein operates within amino-acid biosynthesis; glycine biosynthesis; glycine from L-serine: step 1/1. Catalyzes the reversible interconversion of serine and glycine with tetrahydrofolate (THF) serving as the one-carbon carrier. This reaction serves as the major source of one-carbon groups required for the biosynthesis of purines, thymidylate, methionine, and other important biomolecules. Also exhibits THF-independent aldolase activity toward beta-hydroxyamino acids, producing glycine and aldehydes, via a retro-aldol mechanism. The protein is Serine hydroxymethyltransferase 1 of Mesorhizobium japonicum (strain LMG 29417 / CECT 9101 / MAFF 303099) (Mesorhizobium loti (strain MAFF 303099)).